Reading from the N-terminus, the 580-residue chain is External alternative NAD(P)H-ubiquinone oxidoreductase B3, mitochondrial (580 aa).

A mitochondrion-targeting transit peptide spans 1–38 (MRPFAYFERLSQAFHDYPSLSKILVVSTISGGGLIVYS). FAD is bound at residue 57 to 87 (KVVLLGTGWAGASFLKTLNNSSYEVQVISPR). Residue 221-257 (LHFVVVGGGPTGVEFASELHDFVNEDLVKLYPKAKNL) coordinates NAD(+). Positions 377–412 (KVMEDIAAIFKKADKENSGTLTMKEFHEVMSDICDR) constitute an EF-hand domain. 4 residues coordinate Ca(2+): aspartate 390, serine 394, threonine 396, and glutamate 401. The Microbody targeting signal signature appears at 571-580 (FIFGRDSSRI).

It belongs to the NADH dehydrogenase family. FAD is required as a cofactor. Expressed at low levels in seedlings, roots, stems, buds and flowers and, to a lower extent, in leaves and cotyledons.

It localises to the mitochondrion inner membrane. Its subcellular location is the peroxisome. The catalysed reaction is a quinone + NADH + H(+) = a quinol + NAD(+). It carries out the reaction a ubiquinone + NADH + H(+) = a ubiquinol + NAD(+). Alternative NADH-ubiquinone oxidoreductase which catalyzes the oxidation of mitochondrial NADH does not translocate protons across the inner mitochondrial membrane. The chain is External alternative NAD(P)H-ubiquinone oxidoreductase B3, mitochondrial (NDB3) from Arabidopsis thaliana (Mouse-ear cress).